We begin with the raw amino-acid sequence, 30 residues long: Cyclotide mden-I (30 aa).

The cyclopeptide (Gly-Asn) cross-link spans 1 to 30; that stretch reads GIPCGESCVYIPCITTAIGCSCKNKVCYRN. Intrachain disulfides connect Cys4–Cys20, Cys8–Cys22, and Cys13–Cys27.

The protein belongs to the cyclotide family. Bracelet subfamily. This is a cyclic peptide.

Its function is as follows. Probably participates in a plant defense mechanism. The polypeptide is Cyclotide mden-I (Melicytus dentatus (Tree violet)).